Consider the following 727-residue polypeptide: Endothelin-converting enzyme homolog (727 aa).

The Cytoplasmic portion of the chain corresponds to 1–44 (MSFNFSRYSGAYTTTFSFLLLALLIVSAVLLSRPYAPALLHAEE). Residues 45–65 (AYCVSMSCVTAAASVLSLMDA) form a helical; Signal-anchor for type II membrane protein membrane-spanning segment. The Peptidase M13 domain maps to 46 to 727 (YCVSMSCVTA…MNPVHKCEVW (682 aa)). Cystine bridges form between Cys47-Cys52, Cys70-Cys712, Cys78-Cys672, Cys134-Cys392, and Cys601-Cys724. Over 66-727 (TADPCSDFYQ…MNPVHKCEVW (662 aa)) the chain is Extracellular. Residues Asn138, Asn160, Asn164, Asn169, Asn222, Asn309, Asn337, Asn340, and Asn511 are each glycosylated (N-linked (GlcNAc...) asparagine). Position 564 (His564) interacts with Zn(2+). The active site involves Glu565. His568 is a binding site for Zn(2+). 2 N-linked (GlcNAc...) asparagine glycosylation sites follow: Asn589 and Asn608. A Zn(2+)-binding site is contributed by Glu624. Asp628 acts as the Proton donor in catalysis. The N-linked (GlcNAc...) asparagine glycan is linked to Asn656.

This sequence belongs to the peptidase M13 family. Zn(2+) serves as cofactor. Highly expressed in brain and midgut, and to a lesser extent in fat body, ovaries, testes and haemocytes.

Its subcellular location is the cell membrane. The chain is Endothelin-converting enzyme homolog from Locusta migratoria (Migratory locust).